A 130-amino-acid chain; its full sequence is Small ribosomal subunit protein uS9 (130 aa).

This sequence belongs to the universal ribosomal protein uS9 family.

In Polaromonas sp. (strain JS666 / ATCC BAA-500), this protein is Small ribosomal subunit protein uS9.